The sequence spans 753 residues: Pumilio homolog 23 (753 aa).

Residues 1 to 84 form a disordered region; sequence MVSVGSKSLP…SEFEHQNQFV (84 aa). Basic and acidic residues-rich tracts occupy residues 23–38, 47–57, and 73–84; these read MGERGKSSNNHSERNK, GNRGFDVDSSK, and KHSEFEHQNQFV. Pumilio repeat units follow at residues 123 to 158, 159 to 198, 206 to 244, 284 to 325, 345 to 380, 381 to 418, 526 to 563, and 564 to 599; these read ETRGREYEIATDYIISHVLQTLLEGCELDQLCSFIR, NSASVFPAIAMDRSGSHVAESALKSLATHLENPDAYSVIE, KVIVDNPLDMMCNCYGSHVLRRLLCLCKGVSLDSPELYG, GLLS…EIIP, NVAKEILESMKDNSFSHLVEVILEVAPESLYNEMFN, KVFKNSLFELSVDRCANFVIQALISHARDQEQMGIMWE, SMKAEYITETAKDSSGARVIEAFLASDAATKQKRRLII, and KLRGHFGELSLHTSGSFTVEKCFDACNLTLREAIAS. The 354-residue stretch at 322–675 folds into the PUM-HD domain; the sequence is EIIPLILRCN…DASEDAAQEI (354 aa). Composition is skewed to basic and acidic residues over residues 677–688, 699–712, and 719–728; these read VKNTRKEIDHHP, HAKDKDEPFAGEKR, and KTSEATDKPK. The disordered stretch occupies residues 677 to 753; the sequence is VKNTRKEIDH…KNRHSNKMRI (77 aa). Over residues 744 to 753 the composition is skewed to basic residues; sequence KNRHSNKMRI.

The protein localises to the nucleus. It localises to the nucleolus. In terms of biological role, sequence-specific RNA-binding protein that regulates translation and mRNA stability by binding the 3'-UTR of target mRNAs. This chain is Pumilio homolog 23 (APUM23), found in Arabidopsis thaliana (Mouse-ear cress).